The chain runs to 308 residues: Methionyl-tRNA formyltransferase (308 aa).

110–113 (SLLP) is a binding site for (6S)-5,6,7,8-tetrahydrofolate.

This sequence belongs to the Fmt family.

It catalyses the reaction L-methionyl-tRNA(fMet) + (6R)-10-formyltetrahydrofolate = N-formyl-L-methionyl-tRNA(fMet) + (6S)-5,6,7,8-tetrahydrofolate + H(+). Its function is as follows. Attaches a formyl group to the free amino group of methionyl-tRNA(fMet). The formyl group appears to play a dual role in the initiator identity of N-formylmethionyl-tRNA by promoting its recognition by IF2 and preventing the misappropriation of this tRNA by the elongation apparatus. This Neisseria gonorrhoeae (strain ATCC 700825 / FA 1090) protein is Methionyl-tRNA formyltransferase.